We begin with the raw amino-acid sequence, 176 residues long: Adenine phosphoribosyltransferase (176 aa).

The protein belongs to the purine/pyrimidine phosphoribosyltransferase family. Homodimer.

The protein localises to the cytoplasm. It catalyses the reaction AMP + diphosphate = 5-phospho-alpha-D-ribose 1-diphosphate + adenine. Its pathway is purine metabolism; AMP biosynthesis via salvage pathway; AMP from adenine: step 1/1. Catalyzes a salvage reaction resulting in the formation of AMP, that is energically less costly than de novo synthesis. This is Adenine phosphoribosyltransferase from Borreliella afzelii (strain PKo) (Borrelia afzelii).